Reading from the N-terminus, the 394-residue chain is Flagellin B (394 aa).

It belongs to the bacterial flagellin family.

The protein resides in the secreted. It is found in the bacterial flagellum. Functionally, flagellin is the subunit protein which polymerizes to form the filaments of bacterial flagella. In Rhizobium meliloti (strain 1021) (Ensifer meliloti), this protein is Flagellin B (flaB).